A 1004-amino-acid polypeptide reads, in one-letter code: Importin subunit beta-5 (1004 aa).

Met1 is modified (N-acetylmethionine). The 80-residue stretch at 21–100 folds into the Importin N-terminal domain; the sequence is AETQLLQWCD…REVLLKLCLN (80 aa).

Belongs to the importin beta family. In terms of assembly, interacts with NAP1.

It is found in the cytoplasm. The protein resides in the nucleus. Its subcellular location is the nuclear pore complex. Required for nuclear protein import and mediates docking of import substrate to distinct nucleoporins. Serves a receptor for nuclear localization signals. Mediates the nuclear import of TATA-binding protein (TBP) and of histones H2A and H2B. The polypeptide is Importin subunit beta-5 (KAP114) (Saccharomyces cerevisiae (strain ATCC 204508 / S288c) (Baker's yeast)).